We begin with the raw amino-acid sequence, 45 residues long: Photosystem II reaction center protein K (45 aa).

The propeptide occupies 1–8; sequence MLMSLFLA. The helical transmembrane segment at 23 to 43 threads the bilayer; it reads ILPIIPLFFLLLAFVWQAAIG.

The protein belongs to the PsbK family. PSII is composed of 1 copy each of membrane proteins PsbA, PsbB, PsbC, PsbD, PsbE, PsbF, PsbH, PsbI, PsbJ, PsbK, PsbL, PsbM, PsbT, PsbX, PsbY, PsbZ, Psb30/Ycf12, at least 3 peripheral proteins of the oxygen-evolving complex and a large number of cofactors. It forms dimeric complexes.

It localises to the plastid. It is found in the cyanelle thylakoid membrane. Its function is as follows. One of the components of the core complex of photosystem II (PSII). PSII is a light-driven water:plastoquinone oxidoreductase that uses light energy to abstract electrons from H(2)O, generating O(2) and a proton gradient subsequently used for ATP formation. It consists of a core antenna complex that captures photons, and an electron transfer chain that converts photonic excitation into a charge separation. This chain is Photosystem II reaction center protein K, found in Cyanophora paradoxa.